The following is a 775-amino-acid chain: Suppressor of glycerol defect protein 1 (775 aa).

2 stretches are compositionally biased toward basic residues: residues 1–11 (MRPIKKSRSLK) and 28–49 (RRGK…RISR). 2 disordered regions span residues 1–101 (MRPI…LLDP) and 152–253 (IDDI…GGDK). Basic and acidic residues-rich tracts occupy residues 52 to 79 (NGYE…DAHR), 177 to 193 (TGDH…REGN), and 209 to 223 (DEFH…RMDP). Residues 262-463 (RRKLQGSLNK…ESITNLKENK (202 aa)) enclose the MIF4G domain. Residues 565 to 689 (TLRTSIFVAL…PLTILKHVDF (125 aa)) enclose the MI domain.

This sequence belongs to the CWC22 family.

The protein localises to the nucleus. The protein resides in the nucleolus. Functionally, involved in osmoregulatory glycerol response. This chain is Suppressor of glycerol defect protein 1 (sgd1), found in Schizosaccharomyces pombe (strain 972 / ATCC 24843) (Fission yeast).